A 284-amino-acid polypeptide reads, in one-letter code: Bifunctional protein FolD (284 aa).

NADP(+) contacts are provided by residues 166–168 (GAS) and I232.

The protein belongs to the tetrahydrofolate dehydrogenase/cyclohydrolase family. In terms of assembly, homodimer.

The catalysed reaction is (6R)-5,10-methylene-5,6,7,8-tetrahydrofolate + NADP(+) = (6R)-5,10-methenyltetrahydrofolate + NADPH. It catalyses the reaction (6R)-5,10-methenyltetrahydrofolate + H2O = (6R)-10-formyltetrahydrofolate + H(+). Its pathway is one-carbon metabolism; tetrahydrofolate interconversion. Catalyzes the oxidation of 5,10-methylenetetrahydrofolate to 5,10-methenyltetrahydrofolate and then the hydrolysis of 5,10-methenyltetrahydrofolate to 10-formyltetrahydrofolate. The sequence is that of Bifunctional protein FolD from Shewanella amazonensis (strain ATCC BAA-1098 / SB2B).